The primary structure comprises 541 residues: MESQRNILLIGLLFVSFLLWQQWQADKAPKPVATESSVVANATTNHSADVPEADTSVPAALTATQNLITVKTDQLDVQINPVGGDIVFAALVSHKLEQGKDQPFVLLEQTKDFTYIAQSGLIGRDGIDSSAKGRAAFAANKTEFTLADGQDTLEVPLTYVADNGVTYTKVFVFHRGKFNVDIDYKINNTSAAPLQVQMYGQIKQTIKPSESSMMMPTYRGAAFSTQDVRYEKYKFEDMSKSNLNQPTLGGWAAMLQHYFVSAWIPPATDSNTIFSSVSAGGLANIGFRGAVYDIAPGATQEISSQFYVGPKDQKALSALSDTLNLVVDYGFLWWLAVPIHWLLMFYQSFVGNWGVAIILITLTVRGLLFPLTKAQYTSMAKMRNLQPKLQDLKERFGDDRQKMGQAMMELYKKEKVNPMGGCLPILLQMPIFIALYWVLLESFELRHAPFMLWIHDLSVQDPYYILPLLMGASMFVMQKMQPIAPTMDPMQVKMMQWMPMIFTVFFLWFPSGLVLYWLVGNIVAIIQQKIIYAGLEKKGLK.

Helical transmembrane passes span 6-26 (NILL…WQAD), 349-369 (FVGN…GLLF), 420-440 (GGCL…WVLL), 457-477 (LSVQ…MFVM), and 500-520 (MIFT…WLVG).

Belongs to the OXA1/ALB3/YidC family. Type 1 subfamily. Interacts with the Sec translocase complex via SecD. Specifically interacts with transmembrane segments of nascent integral membrane proteins during membrane integration.

Its subcellular location is the cell inner membrane. Functionally, required for the insertion and/or proper folding and/or complex formation of integral membrane proteins into the membrane. Involved in integration of membrane proteins that insert both dependently and independently of the Sec translocase complex, as well as at least some lipoproteins. Aids folding of multispanning membrane proteins. The polypeptide is Membrane protein insertase YidC (Shewanella sp. (strain ANA-3)).